A 524-amino-acid polypeptide reads, in one-letter code: Na(+)/H(+) antiporter NhaB (524 aa).

The next 9 helical transmembrane spans lie at 13–33 (FLGN…IINP), 98–118 (LLLV…LFVF), 140–160 (AFLS…SVSV), 239–259 (FFIR…LVCL), 304–324 (AIIG…VGLV), 325–345 (GLSV…HSLG), 358–378 (LTVF…TPII), 448–468 (ATPN…APLI), and 479–499 (ALPY…FLLV).

It belongs to the NhaB Na(+)/H(+) (TC 2.A.34) antiporter family.

The protein resides in the cell inner membrane. The catalysed reaction is 2 Na(+)(in) + 3 H(+)(out) = 2 Na(+)(out) + 3 H(+)(in). Functionally, na(+)/H(+) antiporter that extrudes sodium in exchange for external protons. The polypeptide is Na(+)/H(+) antiporter NhaB (Yersinia pseudotuberculosis serotype O:3 (strain YPIII)).